A 115-amino-acid chain; its full sequence is Large ribosomal subunit protein bL20 (115 aa).

Belongs to the bacterial ribosomal protein bL20 family.

Binds directly to 23S ribosomal RNA and is necessary for the in vitro assembly process of the 50S ribosomal subunit. It is not involved in the protein synthesizing functions of that subunit. This is Large ribosomal subunit protein bL20 from Myxococcus xanthus (strain DK1622).